The following is a 575-amino-acid chain: RecBCD enzyme subunit RecD (575 aa).

ATP is bound at residue 170–177; the sequence is GGPGTGKT.

This sequence belongs to the RecD family. As to quaternary structure, heterotrimer of RecB, RecC and RecD. All subunits contribute to DNA-binding.

It carries out the reaction Couples ATP hydrolysis with the unwinding of duplex DNA at the replication fork by translocating in the 5'-3' direction. This creates two antiparallel DNA single strands (ssDNA). The leading ssDNA polymer is the template for DNA polymerase III holoenzyme which synthesizes a continuous strand.. The catalysed reaction is ATP + H2O = ADP + phosphate + H(+). In terms of biological role, a helicase/nuclease that prepares dsDNA breaks (DSB) for recombinational DNA repair. Binds to DSBs and unwinds DNA via a highly rapid and processive ATP-dependent bidirectional helicase activity. Holoenzyme degrades any linearized DNA that is unable to undergo homologous recombination. In the holoenzyme this subunit has ssDNA-dependent ATPase and 5'-3' helicase activity. When added to pre-assembled RecBC greatly stimulates nuclease activity and augments holoenzyme processivity. Unlike the case in E.coli, suppresses RecA-dependent homologous recombination, is instead required for single-strand annealing pathway repair of DSB. A helicase/nuclease that prepares dsDNA breaks (DSB) for recombinational DNA repair. Binds to DSBs and unwinds DNA via a highly rapid and processive ATP-dependent bidirectional helicase activity. Unwinds dsDNA until it encounters a Chi (crossover hotspot instigator) sequence from the 3' direction. Cuts ssDNA a few nucleotides 3' to the Chi site. The properties and activities of the enzyme are changed at Chi. The Chi-altered holoenzyme produces a long 3'-ssDNA overhang and facilitates RecA-binding to the ssDNA for homologous DNA recombination and repair. Holoenzyme degrades any linearized DNA that is unable to undergo homologous recombination. In the holoenzyme this subunit has ssDNA-dependent ATPase and 5'-3' helicase activity. When added to pre-assembled RecBC greatly stimulates nuclease activity and augments holoenzyme processivity. Negatively regulates the RecA-loading ability of RecBCD. In Mycobacterium tuberculosis (strain CDC 1551 / Oshkosh), this protein is RecBCD enzyme subunit RecD.